The primary structure comprises 140 residues: Acyl-coenzyme A thioesterase 13 (140 aa).

An N-acetylmethionine modification is found at M1. K27, K37, and K43 each carry N6-acetyllysine. A CoA-binding site is contributed by E46. Positions 50 and 81 each coordinate substrate. Residues S83, 90-95 (YMSPAK), and 108-113 (KQGKTL) each bind CoA. N6-acetyllysine occurs at positions 108 and 127. H137 provides a ligand contact to CoA.

Belongs to the thioesterase PaaI family. Homotetramer. Interacts with PCTP. As to expression, highly expressed in the kidney and moderately in the heart, liver, brain, small and large intestine. Also expressed in brown adipose tissue.

It is found in the cytoplasm. The protein localises to the cytosol. The protein resides in the mitochondrion. Its subcellular location is the nucleus. It localises to the cytoskeleton. It is found in the spindle. The enzyme catalyses a fatty acyl-CoA + H2O = a fatty acid + CoA + H(+). It catalyses the reaction decanoyl-CoA + H2O = decanoate + CoA + H(+). It carries out the reaction octanoyl-CoA + H2O = octanoate + CoA + H(+). The catalysed reaction is butanoyl-CoA + H2O = butanoate + CoA + H(+). The enzyme catalyses hexanoyl-CoA + H2O = hexanoate + CoA + H(+). It catalyses the reaction tetradecanoyl-CoA + H2O = tetradecanoate + CoA + H(+). It carries out the reaction hexadecanoyl-CoA + H2O = hexadecanoate + CoA + H(+). The catalysed reaction is dodecanoyl-CoA + H2O = dodecanoate + CoA + H(+). The enzyme catalyses (9Z)-octadecenoyl-CoA + H2O = (9Z)-octadecenoate + CoA + H(+). Catalyzes the hydrolysis of acyl-CoAs into free fatty acids and coenzyme A (CoASH), regulating their respective intracellular levels. Has acyl-CoA thioesterase activity towards medium (C12) and long-chain (C18) fatty acyl-CoA substrates. Can also hydrolyze 3-hydroxyphenylacetyl-CoA and 3,4-dihydroxyphenylacetyl-CoA (in vitro). May play a role in controlling adaptive thermogenesis. The sequence is that of Acyl-coenzyme A thioesterase 13 from Mus musculus (Mouse).